The sequence spans 274 residues: Thiamine kinase (274 aa).

This sequence belongs to the thiamine kinase family.

It carries out the reaction thiamine + ATP = thiamine phosphate + ADP + H(+). It participates in cofactor biosynthesis; thiamine diphosphate biosynthesis; thiamine phosphate from thiamine: step 1/1. In terms of biological role, catalyzes the ATP-dependent phosphorylation of thiamine to thiamine phosphate. Is involved in thiamine salvage. The chain is Thiamine kinase from Shigella sonnei (strain Ss046).